Reading from the N-terminus, the 861-residue chain is Semaphorin-4D (861 aa).

A signal peptide spans 1–23 (MRMCAPVRGLFLALVVVLRTAVA). The Sema domain maps to 24 to 500 (FAPVPRLTWE…SNSGVVQAPL (477 aa)). Residues 24-733 (FAPVPRLTWE…TVYLKSSDNR (710 aa)) lie on the Extracellular side of the membrane. Residues asparagine 49 and asparagine 77 are each glycosylated (N-linked (GlcNAc...) asparagine). Intrachain disulfides connect cysteine 97/cysteine 108 and cysteine 126/cysteine 135. Residues asparagine 139 and asparagine 191 are each glycosylated (N-linked (GlcNAc...) asparagine). Cystine bridges form between cysteine 257-cysteine 370 and cysteine 281-cysteine 326. N-linked (GlcNAc...) asparagine glycosylation is found at asparagine 379 and asparagine 419. One can recognise a PSI domain in the interval 502 to 551 (FCEKHGSCEDCVLARDPYCAWSPAIKACVTLHQEEASSRGWIQDMSGDTS). 4 cysteine pairs are disulfide-bonded: cysteine 503-cysteine 520, cysteine 509-cysteine 553, cysteine 512-cysteine 529, and cysteine 576-cysteine 624. In terms of domain architecture, Ig-like C2-type spans 555-636 (DKSKESFNQH…EERVRNKTVS (82 aa)). 2 N-linked (GlcNAc...) asparagine glycosylation sites follow: asparagine 613 and asparagine 632. The interval 649–709 (VPRTPPSPTS…KSSSGTSCEP (61 aa)) is disordered. The span at 657–681 (TSEDAQTEGSKITSKMPVASTQGSS) shows a compositional bias: polar residues. Residues 734 to 754 (LLMSLLLFIFVLFLCLFSYNC) traverse the membrane as a helical segment. At 755–861 (YKGYLPGQCL…KFADSDADGD (107 aa)) the chain is on the cytoplasmic side. Residues serine 782 and serine 832 each carry the phosphoserine modification. Residues 793-839 (VEPGSFSQQNGDHPKPALDTGYETEQDTITSKVPTDREDSQRIDELS) are disordered. Residues 826–839 (PTDREDSQRIDELS) show a composition bias toward basic and acidic residues.

Belongs to the semaphorin family. Homodimer. Interacts with PLXNB1. Interacts with PLXNB2. In terms of tissue distribution, strongly expressed in lymphoid tissues, especially in the thymus, as well as in the nervous tissues. Expressed in neurons and glia in the developing hippocampus.

The protein localises to the cell membrane. Cell surface receptor for PLXNB1 and PLXNB2 that plays an important role in cell-cell signaling. Regulates GABAergic synapse development. Promotes the development of inhibitory synapses in a PLXNB1-dependent manner. Modulates the complexity and arborization of developing neurites in hippocampal neurons by activating PLXNB1 and interaction with PLXNB1 mediates activation of RHOA. Promotes the migration of cerebellar granule cells. Plays a role in the immune system; induces B-cells to aggregate and improves their viability (in vitro). Induces endothelial cell migration through the activation of PTK2B/PYK2, SRC, and the phosphatidylinositol 3-kinase-AKT pathway. The chain is Semaphorin-4D (Sema4d) from Mus musculus (Mouse).